Reading from the N-terminus, the 257-residue chain is Pyridoxine 5'-phosphate synthase (257 aa).

A 3-amino-2-oxopropyl phosphate-binding site is contributed by N6. 8 to 9 (DH) is a binding site for 1-deoxy-D-xylulose 5-phosphate. R17 is a 3-amino-2-oxopropyl phosphate binding site. H42 serves as the catalytic Proton acceptor. Residues R44 and H49 each contribute to the 1-deoxy-D-xylulose 5-phosphate site. The active-site Proton acceptor is the E69. T99 is a binding site for 1-deoxy-D-xylulose 5-phosphate. H211 (proton donor) is an active-site residue. 3-amino-2-oxopropyl phosphate is bound by residues G212 and 233 to 234 (GQ).

It belongs to the PNP synthase family. In terms of assembly, homooctamer; tetramer of dimers.

Its subcellular location is the cytoplasm. The catalysed reaction is 3-amino-2-oxopropyl phosphate + 1-deoxy-D-xylulose 5-phosphate = pyridoxine 5'-phosphate + phosphate + 2 H2O + H(+). Its pathway is cofactor biosynthesis; pyridoxine 5'-phosphate biosynthesis; pyridoxine 5'-phosphate from D-erythrose 4-phosphate: step 5/5. Catalyzes the complicated ring closure reaction between the two acyclic compounds 1-deoxy-D-xylulose-5-phosphate (DXP) and 3-amino-2-oxopropyl phosphate (1-amino-acetone-3-phosphate or AAP) to form pyridoxine 5'-phosphate (PNP) and inorganic phosphate. The polypeptide is Pyridoxine 5'-phosphate synthase (Campylobacter hominis (strain ATCC BAA-381 / DSM 21671 / CCUG 45161 / LMG 19568 / NCTC 13146 / CH001A)).